A 652-amino-acid chain; its full sequence is Serine/threonine-protein kinase ssp1 (652 aa).

At Y58 the chain carries Phosphotyrosine. S59 is subject to Phosphoserine. Y63 carries the post-translational modification Phosphotyrosine. One can recognise a Protein kinase domain in the interval 135 to 409; that stretch reads YEIIKELGRG…LVEVKLHPWT (275 aa). ATP-binding positions include 141 to 149 and K164; that span reads LGRGMHGKV. The Proton acceptor role is filled by D267. 2 disordered regions span residues 467-491 and 506-529; these read DSSSSVPSDSSICRPESSGNSSIGL and NESQKDRERKQVHPVEMGRNSSEK. Over residues 508-518 the composition is skewed to basic and acidic residues; the sequence is SQKDRERKQVH.

This sequence belongs to the protein kinase superfamily. Ser/Thr protein kinase family.

The protein resides in the cytoplasm. It catalyses the reaction L-seryl-[protein] + ATP = O-phospho-L-seryl-[protein] + ADP + H(+). The catalysed reaction is L-threonyl-[protein] + ATP = O-phospho-L-threonyl-[protein] + ADP + H(+). Functionally, involved in actin localization and thus in polarized cell growth. In Schizosaccharomyces pombe (strain 972 / ATCC 24843) (Fission yeast), this protein is Serine/threonine-protein kinase ssp1 (ssp1).